The chain runs to 309 residues: D-allose kinase (309 aa).

ATP is bound by residues 10 to 17 (GVDMGATH) and 142 to 149 (GMGFAVWM).

It belongs to the ROK (NagC/XylR) family.

It catalyses the reaction D-allose + ATP = D-allose 6-phosphate + ADP + H(+). The protein operates within carbohydrate degradation; D-allose degradation. Its function is as follows. Catalyzes the phosphorylation of D-allose to D-allose 6-phosphate. Also has low level glucokinase activity in vitro. The polypeptide is D-allose kinase (Escherichia coli (strain K12)).